The sequence spans 280 residues: Transcription factor ovo-like homolog lin-48 (280 aa).

4 consecutive C2H2-type zinc fingers follow at residues 133–155, 161–183, 189–212, and 228–251; these read LTCH…IKCH, YLCT…TRTH, YKCE…RKVH, and FVCE…KVVH.

Its subcellular location is the nucleus. Transcription factor. Involved in development of the hindgut, the male tail, and the excretory duct cell. Involved in modulating function of excretory duct cells. Plays a role in left/right patterning of cell fates in the hindgut. The protein is Transcription factor ovo-like homolog lin-48 of Caenorhabditis elegans.